A 177-amino-acid polypeptide reads, in one-letter code: Peptide methionine sulfoxide reductase MsrA (177 aa).

Residue C11 is part of the active site.

This sequence belongs to the MsrA Met sulfoxide reductase family.

It catalyses the reaction L-methionyl-[protein] + [thioredoxin]-disulfide + H2O = L-methionyl-(S)-S-oxide-[protein] + [thioredoxin]-dithiol. It carries out the reaction [thioredoxin]-disulfide + L-methionine + H2O = L-methionine (S)-S-oxide + [thioredoxin]-dithiol. In terms of biological role, has an important function as a repair enzyme for proteins that have been inactivated by oxidation. Catalyzes the reversible oxidation-reduction of methionine sulfoxide in proteins to methionine. This is Peptide methionine sulfoxide reductase MsrA from Picrophilus torridus (strain ATCC 700027 / DSM 9790 / JCM 10055 / NBRC 100828 / KAW 2/3).